Here is a 548-residue protein sequence, read N- to C-terminus: Sulochrin halogenase gedL (548 aa).

FAD is bound by residues G14, A17, and E47. Chloride is bound by residues S333 and G334. V335 is an FAD binding site.

Belongs to the flavin-dependent halogenase family.

The catalysed reaction is sulochrin + 2 FADH2 + 2 chloride + 2 O2 = dihydrogeodin + 2 FAD + 4 H2O + H(+). It functions in the pathway secondary metabolite biosynthesis. Its function is as follows. Sulochrin halogenase; part of the gene cluster that mediates the biosynthesis of geodin, an intermediate in the biosynthesis of other natural products. The pathway begins with the synthesis of atrochrysone thioester by the polyketide synthase (PKS) gedC. The atrochrysone carboxyl ACP thioesterase gedB then breaks the thioester bond and releases the atrochrysone carboxylic acid from gedC. The atrochrysone carboxylic acid is then converted to atrochrysone which is further transformed into emodinanthrone. The next step is performed by the emodinanthrone oxygenase gedH that catalyzes the oxidation of emodinanthrone to emodin. Emodin O-methyltransferase encoded probably by gedA then catalyzes methylation of the 8-hydroxy group of emodin to form questin. Ring cleavage of questin by questin oxidase gedK leads to desmethylsulochrin via several intermediates including questin epoxide. Another methylation step probably catalyzed by methyltransferase gedG leads to the formation of sulochrin which is further converted to dihydrogeodin by the sulochrin halogenase gedL. Finally, the dihydrogeodin oxidase gedJ catalyzes the stereospecific phenol oxidative coupling reaction converting dihydrogeodin to geodin. The chain is Sulochrin halogenase gedL from Aspergillus terreus (strain NIH 2624 / FGSC A1156).